The primary structure comprises 367 residues: DNA replication and repair protein RecF (367 aa).

30–37 (GANGSGKT) contacts ATP.

This sequence belongs to the RecF family.

The protein resides in the cytoplasm. The RecF protein is involved in DNA metabolism; it is required for DNA replication and normal SOS inducibility. RecF binds preferentially to single-stranded, linear DNA. It also seems to bind ATP. The sequence is that of DNA replication and repair protein RecF from Pseudomonas savastanoi pv. phaseolicola (strain 1448A / Race 6) (Pseudomonas syringae pv. phaseolicola (strain 1448A / Race 6)).